Here is a 217-residue protein sequence, read N- to C-terminus: Cytidylate kinase (217 aa).

10-18 (GPAGAGKST) is a binding site for ATP.

Belongs to the cytidylate kinase family. Type 1 subfamily.

Its subcellular location is the cytoplasm. It carries out the reaction CMP + ATP = CDP + ADP. The catalysed reaction is dCMP + ATP = dCDP + ADP. This Clostridium botulinum (strain Loch Maree / Type A3) protein is Cytidylate kinase.